Consider the following 1573-residue polypeptide: Synaptojanin-1 (1573 aa).

Residues 119-442 (VRKVLNSGNF…GDSISKIYAG (324 aa)) enclose the SAC domain. Residues 500-899 (GSLRVSEQTL…GPPDGTVLVS (400 aa)) are catalytic. Phosphoserine is present on residues serine 820 and serine 830. Positions 902 to 971 (SSLPENNFFD…RTITIALKSP (70 aa)) constitute an RRM domain. Positions 1029-1054 (HLQPSSSSGLGTSPSSSPRTSPCQSP) are enriched in low complexity. Disordered stretches follow at residues 1029–1322 (HLQP…PLKI), 1341–1360 (SVQT…QLPS), 1370–1463 (VSCM…GFKD), and 1535–1573 (SRRP…FTER). Phosphoserine is present on serine 1053. The span at 1108 to 1130 (PPPPRPVAPPTRPAPPQRPPPPS) shows a compositional bias: pro residues. A phosphoserine mark is found at serine 1150 and serine 1178. At arginine 1201 the chain carries Omega-N-methylarginine. Threonine 1220 carries the phosphothreonine modification. Polar residues predominate over residues 1221–1234 (PESQSKTSETSKGS). Serine 1292 carries the phosphoserine modification. Low complexity predominate over residues 1293 to 1304 (SHSLPSEASSQP). Basic and acidic residues predominate over residues 1313–1322 (DGKRESPLKI). Phosphoserine occurs at positions 1318 and 1345. Threonine 1349 bears the Phosphothreonine mark. Residues 1382 to 1407 (RSQSQENMRSSPNPFITGLTRTNPFS) are compositionally biased toward polar residues. Repeat copies occupy residues 1396 to 1398 (FIT), 1406 to 1408 (FSD), and 1417 to 1419 (FRA). The 3 X 3 AA repeats of N-P-F stretch occupies residues 1396 to 1419 (FITGLTRTNPFSDRTAAPGNPFRA). A compositionally biased stretch (pro residues) spans 1536 to 1555 (RRPPPPPVPLLPPGTSPPVD). Serine 1551 and serine 1565 each carry phosphoserine.

It belongs to the synaptojanin family. This sequence in the central section; belongs to the inositol 1,4,5-trisphosphate 5-phosphatase family. Interacts with ASH/GRB2. Interacts with PACSIN1, PACSIN2 and PACSIN3. Interacts with AMPH, SH3GL1, SH3GL2 and SH3GL3. Interacts with MYO1E (via SH3 domain). Interacts with BIN1 and DNM1. Interacts with EPS15.

Its subcellular location is the cytoplasm. The protein localises to the perinuclear region. The enzyme catalyses a 1,2-diacyl-sn-glycero-3-phospho-(1D-myo-inositol-4,5-bisphosphate) + H2O = a 1,2-diacyl-sn-glycero-3-phospho-(1D-myo-inositol 4-phosphate) + phosphate. Phosphatase that acts on various phosphoinositides, including phosphatidylinositol 4-phosphate, phosphatidylinositol (4,5)-bisphosphate and phosphatidylinositol (3,4,5)-trisphosphate. Has a role in clathrin-mediated endocytosis. Hydrolyzes PIP2 bound to actin regulatory proteins resulting in the rearrangement of actin filaments downstream of tyrosine kinase and ASH/GRB2. This chain is Synaptojanin-1 (SYNJ1), found in Homo sapiens (Human).